A 909-amino-acid chain; its full sequence is Disintegrin and metalloproteinase domain-containing protein 12 (909 aa).

A signal peptide spans 1–28; sequence MAARPLPVSPARALLLALAGALLAPCEA. Residues 29-207 constitute a propeptide that is removed on maturation; sequence RGVSLWNQGR…SQTWARRHKR (179 aa). 2 N-linked (GlcNAc...) asparagine glycosylation sites follow: N111 and N149. The short motif at 177-184 is the Cysteine switch element; sequence GSCGSHHN. Zn(2+) is bound by residues C179 and H350. Residues 208–708 are Extracellular-facing; the sequence is ETLKATKYVE…GPIRQADNQG (501 aa). One can recognise a Peptidase M12B domain in the interval 214–416; it reads KYVELVIVAD…GMGVCLFNLP (203 aa). 3 disulfide bridges follow: C325/C411, C367/C395, and C369/C378. Residue E351 is part of the active site. H354 and H360 together coordinate Zn(2+). Residues N381 and N452 are each glycosylated (N-linked (GlcNAc...) asparagine). Positions 424–510 constitute a Disintegrin domain; it reads GQKCGNRFVE…HCPANVYLHD (87 aa). A disulfide bridge links C482 with C502. Residue N651 is glycosylated (N-linked (GlcNAc...) asparagine). Positions 656-688 constitute an EGF-like domain; sequence GVHECAMQCHGRGVCNNRKNCHCEAHWAPPFCD. Disulfide bonds link C660/C670, C664/C676, and C678/C687. Residues 709–729 form a helical membrane-spanning segment; sequence LTIGILVTILCLLAAGFVVYL. Over 730–909 the chain is Cytoplasmic; it reads KRKTLIRLLF…PRSTHTAYIK (180 aa). Residues 822-862 are disordered; the sequence is LHRAPRAPSVPARPLPAKPALRQAQGTCKPNPPQKPLPADP. Positions 828 to 834 match the SH3-binding; class II motif; that stretch reads APSVPAR. The SH3-binding; class I signature appears at 834–841; sequence RPLPAKPA. Residues 851–860 show a composition bias toward pro residues; sequence PNPPQKPLPA. Residues 885–891 carry the SH3-binding; class I motif; it reads RLAPLRP. Phosphotyrosine; by SRC is present on Y907.

As to quaternary structure, interacts with alpha-actinin-2 and with syndecans. Interacts with SH3PXD2A. Interacts with FST3. Interacts with RACK1; the interaction is required for PKC-dependent translocation of ADAM12 to the cell membrane. Zn(2+) is required as a cofactor. Post-translationally, the precursor is cleaved by a furin endopeptidase. In terms of tissue distribution, isoform 1 is expressed in placenta and skeletal, cardiac, and smooth muscle. Isoform 2 seems to be expressed only in placenta or in embryo and fetus. Both forms were expressed in some tumor cells lines. Not detected in brain, lung, liver, kidney or pancreas.

The protein resides in the cell membrane. It is found in the secreted. Involved in skeletal muscle regeneration, specifically at the onset of cell fusion. Also involved in macrophage-derived giant cells (MGC) and osteoclast formation from mononuclear precursors. The protein is Disintegrin and metalloproteinase domain-containing protein 12 (ADAM12) of Homo sapiens (Human).